Consider the following 62-residue polypeptide: Conotoxin Im11.9 (62 aa).

Residues 1-22 (MFRVTSVLLVIVLLNLVVLTNA) form the signal peptide. 4 cysteine pairs are disulfide-bonded: C23–C33, C27–C38, C32–C41, and C37–C46. The propeptide occupies 23-49 (CHMDCSKMTCCSGICCFYCGRPMCPGT).

This sequence belongs to the conotoxin I2 superfamily. Expressed by the venom duct.

The protein localises to the secreted. Functionally, probable neurotoxin. This Conus imperialis (Imperial cone) protein is Conotoxin Im11.9.